Reading from the N-terminus, the 274-residue chain is Probable endonuclease LCL3 (274 aa).

The helical transmembrane segment at 15–32 threads the bilayer; sequence AVLSIILTGSTLTLIYTY. Residues 53-261 form the TNase-like domain; the sequence is HWLYGKVTSV…RSRKKGLWIQ (209 aa). Arg151 is an active-site residue. Asp156 is a Ca(2+) binding site. Residues Glu159 and Arg199 contribute to the active site.

This sequence belongs to the LCL3 family.

The protein localises to the mitochondrion. The protein resides in the membrane. This is Probable endonuclease LCL3 (LCL3) from Saccharomyces cerevisiae (strain Lalvin EC1118 / Prise de mousse) (Baker's yeast).